The chain runs to 338 residues: Anthranilate phosphoribosyltransferase (338 aa).

5-phospho-alpha-D-ribose 1-diphosphate-binding positions include G81, 84–85, S89, 91–94, 109–117, and A121; these read GD, NVST, and KHGNRALSS. G81 lines the anthranilate pocket. S93 lines the Mg(2+) pocket. N112 is an anthranilate binding site. Residue R167 coordinates anthranilate. Residues D226 and E227 each contribute to the Mg(2+) site.

This sequence belongs to the anthranilate phosphoribosyltransferase family. As to quaternary structure, homodimer. Mg(2+) serves as cofactor.

The enzyme catalyses N-(5-phospho-beta-D-ribosyl)anthranilate + diphosphate = 5-phospho-alpha-D-ribose 1-diphosphate + anthranilate. The protein operates within amino-acid biosynthesis; L-tryptophan biosynthesis; L-tryptophan from chorismate: step 2/5. In terms of biological role, catalyzes the transfer of the phosphoribosyl group of 5-phosphorylribose-1-pyrophosphate (PRPP) to anthranilate to yield N-(5'-phosphoribosyl)-anthranilate (PRA). This is Anthranilate phosphoribosyltransferase from Rhodopseudomonas palustris (strain ATCC BAA-98 / CGA009).